The sequence spans 485 residues: MSLFDHSVSELHKKLNNKEISVTDLVEESYKRIADVEDNVKAFLTLDEENARAKAKELDAKIGAEDNGLLFGMPIGVKDNIVTNGLRTTCASKMLANFDPIYDATVVQKLKAADTITIGKLNMDEFAMGSSNENSGFYATKNPWNLDYVPGGSSGGSAAAVAAGEVLFSLGSDTGGSIRQPAAYCGVVGLKPTYGRVSRYGLVAFASSLDQIGPITRTVEDNAYLLQAISGLDRMDATSANVEVGNYLAGLTGDVKGLRIAVPKEYLGEGVGEEARESVLAALKVLEGMGATWEEVSLPHSKYALATYYLLSSSEASANLSRFDGVRYGVRSDNVNNLMDLYKNTRSEGFGDEVKRRIMLGTFALSSGYYDAYYKKAQQVRTLIKNDFENVFANYDVIIGPTTPTPAFKVGEKVDDPMTMYANDILTIPVNLAGVPAISVPCGFGANNMPLGLQIIGKHFDEATIYRVAHAFEQATDHHTKKASL.

Active-site charge relay system residues include lysine 78 and serine 153. Serine 177 (acyl-ester intermediate) is an active-site residue.

The protein belongs to the amidase family. GatA subfamily. In terms of assembly, heterotrimer of A, B and C subunits.

It carries out the reaction L-glutamyl-tRNA(Gln) + L-glutamine + ATP + H2O = L-glutaminyl-tRNA(Gln) + L-glutamate + ADP + phosphate + H(+). Its function is as follows. Allows the formation of correctly charged Gln-tRNA(Gln) through the transamidation of misacylated Glu-tRNA(Gln) in organisms which lack glutaminyl-tRNA synthetase. The reaction takes place in the presence of glutamine and ATP through an activated gamma-phospho-Glu-tRNA(Gln). The sequence is that of Glutamyl-tRNA(Gln) amidotransferase subunit A from Bacillus cereus (strain ATCC 10987 / NRS 248).